A 393-amino-acid chain; its full sequence is S-adenosylmethionine synthase (393 aa).

Residue E9 participates in Mg(2+) binding. H15 contacts ATP. E43 lines the K(+) pocket. L-methionine contacts are provided by E56 and Q99. ATP is bound by residues 167–169 (DGK), 235–238 (SGRF), D246, 252–253 (RK), A269, K273, and K277. An L-methionine-binding site is contributed by D246. K277 provides a ligand contact to L-methionine.

The protein belongs to the AdoMet synthase family. As to quaternary structure, homotetramer. Mn(2+) is required as a cofactor. Mg(2+) serves as cofactor. It depends on Co(2+) as a cofactor. The cofactor is K(+).

It is found in the cytoplasm. The catalysed reaction is L-methionine + ATP + H2O = S-adenosyl-L-methionine + phosphate + diphosphate. Its pathway is amino-acid biosynthesis; S-adenosyl-L-methionine biosynthesis; S-adenosyl-L-methionine from L-methionine: step 1/1. Catalyzes the formation of S-adenosylmethionine from methionine and ATP. The reaction comprises two steps that are both catalyzed by the same enzyme: formation of S-adenosylmethionine (AdoMet) and triphosphate, and subsequent hydrolysis of the triphosphate. The chain is S-adenosylmethionine synthase (SAMS) from Brassica rapa subsp. pekinensis (Chinese cabbage).